A 704-amino-acid chain; its full sequence is Elongation factor G (704 aa).

A tr-type G domain is found at 8 to 290 (EKYRNIGICA…GVVRYLPAPN (283 aa)). Residues 17–24 (AHVDAGKT), 88–92 (DTPGH), and 142–145 (NKMD) each bind GTP.

It belongs to the TRAFAC class translation factor GTPase superfamily. Classic translation factor GTPase family. EF-G/EF-2 subfamily.

It localises to the cytoplasm. Its function is as follows. Catalyzes the GTP-dependent ribosomal translocation step during translation elongation. During this step, the ribosome changes from the pre-translocational (PRE) to the post-translocational (POST) state as the newly formed A-site-bound peptidyl-tRNA and P-site-bound deacylated tRNA move to the P and E sites, respectively. Catalyzes the coordinated movement of the two tRNA molecules, the mRNA and conformational changes in the ribosome. This is Elongation factor G from Francisella tularensis subsp. holarctica (strain LVS).